The chain runs to 169 residues: Ribosome maturation factor RimP (169 aa).

The protein belongs to the RimP family.

It is found in the cytoplasm. In terms of biological role, required for maturation of 30S ribosomal subunits. This Pseudomonas putida (strain ATCC 700007 / DSM 6899 / JCM 31910 / BCRC 17059 / LMG 24140 / F1) protein is Ribosome maturation factor RimP.